A 147-amino-acid polypeptide reads, in one-letter code: Hemoglobin subunit beta (147 aa).

Residue Val-2 is modified to N-acetylvaline. One can recognise a Globin domain in the interval 3 to 147; sequence HLSGSEKTAV…VSHALAHKYH (145 aa). At Thr-13 the chain carries Phosphothreonine. Ser-45 carries the phosphoserine modification. Lys-60 is subject to N6-acetyllysine. His-64 is a binding site for heme b. Residue Lys-83 is modified to N6-acetyllysine. His-93 provides a ligand contact to heme b. Residue Cys-94 is modified to S-nitrosocysteine. Lys-145 bears the N6-acetyllysine mark.

Belongs to the globin family. Heterotetramer of two alpha chains and two beta chains. Red blood cells.

Functionally, involved in oxygen transport from the lung to the various peripheral tissues. This Tachyglossus aculeatus aculeatus (Southeast Australian short-beaked echidna) protein is Hemoglobin subunit beta (HBB).